A 713-amino-acid chain; its full sequence is Protein-glucosylgalactosylhydroxylysine glucosidase (713 aa).

Residues 1 to 21 (MIINSQEYLQPPQWWNERVEA) form the signal peptide. N-linked (GlcNAc...) asparagine glycans are attached at residues N104, N160, N171, N186, and N283. Residue 317-318 (WD) coordinates substrate. A glycan (N-linked (GlcNAc...) asparagine) is linked at N361. Residue E451 is the Proton donor of the active site. N457 and N481 each carry an N-linked (GlcNAc...) asparagine glycan. Position 521 to 522 (521 to 522 (KQ)) interacts with substrate. N-linked (GlcNAc...) asparagine glycosylation is found at N535, N576, and N662.

The protein belongs to the glycosyl hydrolase 65 family.

It is found in the secreted. It catalyses the reaction (5R)-5-O-[alpha-D-glucosyl-(1-&gt;2)-beta-D-galactosyl]-5-hydroxy-L-lysyl-[collagen] + H2O = (5R)-5-O-(beta-D-galactosyl)-5-hydroxy-L-lysyl-[collagen] + D-glucose. Functionally, catalyzes the hydrolysis of glucose from the disaccharide unit linked to hydroxylysine residues of collagen and collagen-like proteins. This Dictyostelium discoideum (Social amoeba) protein is Protein-glucosylgalactosylhydroxylysine glucosidase.